The following is a 338-amino-acid chain: Lipoate-protein ligase A (338 aa).

One can recognise a BPL/LPL catalytic domain in the interval 29–216 (DPNQRVLFLW…AFFSHYGERV (188 aa)). ATP is bound by residues arginine 71, 76 to 79 (GAVF), and lysine 134. Lysine 134 contacts (R)-lipoate.

This sequence belongs to the LplA family. In terms of assembly, monomer.

Its subcellular location is the cytoplasm. The catalysed reaction is L-lysyl-[lipoyl-carrier protein] + (R)-lipoate + ATP = N(6)-[(R)-lipoyl]-L-lysyl-[lipoyl-carrier protein] + AMP + diphosphate + H(+). It participates in protein modification; protein lipoylation via exogenous pathway; protein N(6)-(lipoyl)lysine from lipoate: step 1/2. It functions in the pathway protein modification; protein lipoylation via exogenous pathway; protein N(6)-(lipoyl)lysine from lipoate: step 2/2. Functionally, catalyzes both the ATP-dependent activation of exogenously supplied lipoate to lipoyl-AMP and the transfer of the activated lipoyl onto the lipoyl domains of lipoate-dependent enzymes. This Aeromonas hydrophila subsp. hydrophila (strain ATCC 7966 / DSM 30187 / BCRC 13018 / CCUG 14551 / JCM 1027 / KCTC 2358 / NCIMB 9240 / NCTC 8049) protein is Lipoate-protein ligase A.